The chain runs to 660 residues: MRLGVCFSLAAAASVARAALTATENDTSIVLENDRLRATFDKGRGSIIDLYLDGQDFLGPQSGSTGIGPYLDCYCTPSGFYTAGSTNPVTELVQGTDSTGTKYAGIILNDTYTPTGQEFQQYWFLRDGETGFHMFSRLAYYNETTPFLRNLQELRTLFRPNTDLWTHLTSSDLQTAPLPSDEAIAEQIVVQDATWRLNNTPDDAYYQQFSEYFTKYTFSNHWRDNDVHGLYADGSTSDGTTYGAWLVMNTKDTYYGGPLHSDLTVDGIIYNYIVSNHHGEGTPNITNGFDRTFGPQFYLFNGGGSSSLEELRDEARSLASPSWNADFYDSIAKHVIGYVPSSQRGSVKGTIKLPKNAKSPIAVLTVDGHYFQDNSAVPSSHQYWADIDKNGRFSIDRVVAGKYRLTVYADGIFGDFTRDGIVVKARKSTSIKETWKPESAGTEIWRLGTPDKSSGEFRHGAARDPTHPRHPPEYLIYWGAYDWQSDFPGGIDYMIGESDPATDFNTVHWAVFGPTPDNPVAESNTTHDWRIRFDLSAKQLHARKTATLTIQLAGAKAASGNTDVYNASEPYANLPLRSYINEQEEPLTMVIGYDQSSSCIVRSAVSCYQVREKWEFPASWLKEGSNLLRLSLPTNGTNYESAVLPTSVYVQYDALRLELK.

A signal peptide spans 1 to 18 (MRLGVCFSLAAAASVARA). 4 N-linked (GlcNAc...) asparagine glycosylation sites follow: N25, N109, N142, and N284. The disordered stretch occupies residues 446–466 (RLGTPDKSSGEFRHGAARDPT). Over residues 453–466 (SSGEFRHGAARDPT) the composition is skewed to basic and acidic residues. N-linked (GlcNAc...) asparagine glycans are attached at residues N524, N566, and N635.

Belongs to the polysaccharide lyase 4 family.

It is found in the secreted. It carries out the reaction Endotype eliminative cleavage of L-alpha-rhamnopyranosyl-(1-&gt;4)-alpha-D-galactopyranosyluronic acid bonds of rhamnogalacturonan I domains in ramified hairy regions of pectin leaving L-rhamnopyranose at the reducing end and 4-deoxy-4,5-unsaturated D-galactopyranosyluronic acid at the non-reducing end.. Its function is as follows. Pectinolytic enzymes consist of four classes of enzymes: pectin lyase, polygalacturonase, pectin methylesterase and rhamnogalacturonase. Degrades the rhamnogalacturonan I (RG-I) backbone of pectin. Active against linseed rhamnogalacturonan. This chain is Rhamnogalacturonate lyase B (rglB), found in Emericella nidulans (strain FGSC A4 / ATCC 38163 / CBS 112.46 / NRRL 194 / M139) (Aspergillus nidulans).